A 91-amino-acid polypeptide reads, in one-letter code: Small ribosomal subunit protein uS19 (91 aa).

The protein belongs to the universal ribosomal protein uS19 family.

In terms of biological role, protein S19 forms a complex with S13 that binds strongly to the 16S ribosomal RNA. This is Small ribosomal subunit protein uS19 from Chromohalobacter salexigens (strain ATCC BAA-138 / DSM 3043 / CIP 106854 / NCIMB 13768 / 1H11).